A 196-amino-acid chain; its full sequence is Holliday junction resolvase RecU (196 aa).

4 residues coordinate Mg(2+): Thr-82, Asp-84, Glu-97, and Gln-116.

This sequence belongs to the RecU family. It depends on Mg(2+) as a cofactor.

It is found in the cytoplasm. It catalyses the reaction Endonucleolytic cleavage at a junction such as a reciprocal single-stranded crossover between two homologous DNA duplexes (Holliday junction).. Functionally, endonuclease that resolves Holliday junction intermediates in genetic recombination. Cleaves mobile four-strand junctions by introducing symmetrical nicks in paired strands. Promotes annealing of linear ssDNA with homologous dsDNA. Required for DNA repair, homologous recombination and chromosome segregation. The polypeptide is Holliday junction resolvase RecU (Oceanobacillus iheyensis (strain DSM 14371 / CIP 107618 / JCM 11309 / KCTC 3954 / HTE831)).